Here is a 176-residue protein sequence, read N- to C-terminus: Methylmalonyl-CoA epimerase, mitochondrial (176 aa).

The transit peptide at 1–36 directs the protein to the mitochondrion; sequence MARVLKAAAANAVGLFSRLQAPIPTVRASSTSQPLD. The region spanning 47–176 is the VOC domain; it reads RLNHVAIAVP…GGVLVELEQA (130 aa). His-50 contacts Co(2+). Lys-114 is subject to N6-succinyllysine. Residue His-122 participates in Co(2+) binding. Lys-150 carries the post-translational modification N6-acetyllysine; alternate. Position 150 is an N6-succinyllysine; alternate (Lys-150). Residue Glu-172 participates in Co(2+) binding.

It belongs to the methylmalonyl-CoA epimerase family.

It localises to the mitochondrion. The catalysed reaction is (R)-methylmalonyl-CoA = (S)-methylmalonyl-CoA. In terms of biological role, methylmalonyl-CoA epimerase involved in propionyl-CoA metabolism. The sequence is that of Methylmalonyl-CoA epimerase, mitochondrial from Homo sapiens (Human).